The primary structure comprises 202 residues: Recombination protein RecR (202 aa).

The C4-type zinc-finger motif lies at 56–71 (CRVCGNLDSADPCSVC). The Toprim domain occupies 79-179 (GLICVVESVG…SVTRLAQGIP (101 aa)).

Belongs to the RecR family.

In terms of biological role, may play a role in DNA repair. It seems to be involved in an RecBC-independent recombinational process of DNA repair. It may act with RecF and RecO. In Granulibacter bethesdensis (strain ATCC BAA-1260 / CGDNIH1), this protein is Recombination protein RecR.